We begin with the raw amino-acid sequence, 179 residues long: Ribosome-recycling factor (179 aa).

Belongs to the RRF family.

It localises to the cytoplasm. Functionally, responsible for the release of ribosomes from messenger RNA at the termination of protein biosynthesis. May increase the efficiency of translation by recycling ribosomes from one round of translation to another. This chain is Ribosome-recycling factor, found in Chlamydia trachomatis serovar A (strain ATCC VR-571B / DSM 19440 / HAR-13).